A 338-amino-acid chain; its full sequence is RNA 3'-terminal phosphate cyclase (338 aa).

ATP is bound by residues glutamine 103 and 283-287; that span reads YLADQ. Histidine 308 functions as the Tele-AMP-histidine intermediate in the catalytic mechanism.

It belongs to the RNA 3'-terminal cyclase family. Type 1 subfamily.

The protein localises to the cytoplasm. The enzyme catalyses a 3'-end 3'-phospho-ribonucleotide-RNA + ATP = a 3'-end 2',3'-cyclophospho-ribonucleotide-RNA + AMP + diphosphate. Catalyzes the conversion of 3'-phosphate to a 2',3'-cyclic phosphodiester at the end of RNA. The mechanism of action of the enzyme occurs in 3 steps: (A) adenylation of the enzyme by ATP; (B) transfer of adenylate to an RNA-N3'P to produce RNA-N3'PP5'A; (C) and attack of the adjacent 2'-hydroxyl on the 3'-phosphorus in the diester linkage to produce the cyclic end product. The biological role of this enzyme is unknown but it is likely to function in some aspects of cellular RNA processing. The chain is RNA 3'-terminal phosphate cyclase from Escherichia coli (strain K12 / MC4100 / BW2952).